The sequence spans 105 residues: Nucleoid-associated protein cu1912 (105 aa).

This sequence belongs to the YbaB/EbfC family. Homodimer.

The protein resides in the cytoplasm. Its subcellular location is the nucleoid. In terms of biological role, binds to DNA and alters its conformation. May be involved in regulation of gene expression, nucleoid organization and DNA protection. In Corynebacterium urealyticum (strain ATCC 43042 / DSM 7109), this protein is Nucleoid-associated protein cu1912.